The chain runs to 270 residues: Cell surface glycoprotein CD200 receptor 4 (270 aa).

A signal peptide spans 1–25 (MHALGRIPTLTLLIFINIFVSGSSC). An Ig-like V-type domain is found at 26-145 (TDENQTIQND…GNLEKVYDLQ (120 aa)). Topologically, residues 26–241 (TDENQTIQND…TMTTPRSLLT (216 aa)) are extracellular. Asparagine 29 and asparagine 44 each carry an N-linked (GlcNAc...) asparagine glycan. 4 disulfides stabilise this stretch: cysteine 58/cysteine 129, cysteine 82/cysteine 97, cysteine 164/cysteine 213, and cysteine 183/cysteine 201. Residues 134–229 (PEGNLEKVYD…GNQSLSIELS (96 aa)) form the Ig-like C2-type domain. Asparagine 192 carries N-linked (GlcNAc...) asparagine glycosylation. The helical transmembrane segment at 242-262 (ILYVKMALLVIILLNVGFAFF) threads the bilayer. At 263–270 (QKRNFART) the chain is on the cytoplasmic side.

The protein belongs to the CD200R family. Interacts with TYROBP. Highly expressed in monocytes, NK cells and a subset of NKT cells. Weakly expressed in granulocytes and B-cells (at protein level). Expressed in brain, lung, testis, thymus, intestine and uterus. Expressed in bone marrow derived-macrophage and dendritic cells and mast cells.

It is found in the membrane. Functionally, involved in the recruitment or surface expression of the TYROBP receptor. The polypeptide is Cell surface glycoprotein CD200 receptor 4 (Cd200r4) (Mus musculus (Mouse)).